The sequence spans 277 residues: Phosphate import ATP-binding protein PstB 2 (277 aa).

The ABC transporter domain maps to 31 to 272 (IEVPGLSLFY…PAKKQTEDYI (242 aa)). 63 to 70 (GPSGCGKS) serves as a coordination point for ATP.

The protein belongs to the ABC transporter superfamily. Phosphate importer (TC 3.A.1.7) family. As to quaternary structure, the complex is composed of two ATP-binding proteins (PstB), two transmembrane proteins (PstC and PstA) and a solute-binding protein (PstS).

The protein localises to the cell inner membrane. It carries out the reaction phosphate(out) + ATP + H2O = ADP + 2 phosphate(in) + H(+). In terms of biological role, part of the ABC transporter complex PstSACB involved in phosphate import. Responsible for energy coupling to the transport system. The protein is Phosphate import ATP-binding protein PstB 2 of Pseudomonas putida (strain ATCC 47054 / DSM 6125 / CFBP 8728 / NCIMB 11950 / KT2440).